A 361-amino-acid polypeptide reads, in one-letter code: Chorismate synthase (361 aa).

The segment covering 40–49 (DLQHDLDRRR) has biased composition (basic and acidic residues). Residues 40–60 (DLQHDLDRRRPGTSRHTTQRR) form a disordered region. Positions 48 and 54 each coordinate NADP(+). FMN-binding positions include 125–127 (RSS), 237–238 (NA), G277, 292–296 (KPTSS), and R318.

This sequence belongs to the chorismate synthase family. Homotetramer. FMNH2 is required as a cofactor.

It catalyses the reaction 5-O-(1-carboxyvinyl)-3-phosphoshikimate = chorismate + phosphate. It functions in the pathway metabolic intermediate biosynthesis; chorismate biosynthesis; chorismate from D-erythrose 4-phosphate and phosphoenolpyruvate: step 7/7. Its function is as follows. Catalyzes the anti-1,4-elimination of the C-3 phosphate and the C-6 proR hydrogen from 5-enolpyruvylshikimate-3-phosphate (EPSP) to yield chorismate, which is the branch point compound that serves as the starting substrate for the three terminal pathways of aromatic amino acid biosynthesis. This reaction introduces a second double bond into the aromatic ring system. The protein is Chorismate synthase of Chromohalobacter salexigens (strain ATCC BAA-138 / DSM 3043 / CIP 106854 / NCIMB 13768 / 1H11).